The chain runs to 158 residues: 6,7-dimethyl-8-ribityllumazine synthase (158 aa).

Residues F22, 57 to 59, and 84 to 86 each bind 5-amino-6-(D-ribitylamino)uracil; these read AYE and TVI. (2S)-2-hydroxy-3-oxobutyl phosphate is bound at residue 89–90; the sequence is GT. The Proton donor role is filled by H92. Residue F117 coordinates 5-amino-6-(D-ribitylamino)uracil. Residue R131 participates in (2S)-2-hydroxy-3-oxobutyl phosphate binding.

The protein belongs to the DMRL synthase family. In terms of assembly, forms an icosahedral capsid composed of 60 subunits, arranged as a dodecamer of pentamers.

The catalysed reaction is (2S)-2-hydroxy-3-oxobutyl phosphate + 5-amino-6-(D-ribitylamino)uracil = 6,7-dimethyl-8-(1-D-ribityl)lumazine + phosphate + 2 H2O + H(+). It functions in the pathway cofactor biosynthesis; riboflavin biosynthesis; riboflavin from 2-hydroxy-3-oxobutyl phosphate and 5-amino-6-(D-ribitylamino)uracil: step 1/2. Functionally, catalyzes the formation of 6,7-dimethyl-8-ribityllumazine by condensation of 5-amino-6-(D-ribitylamino)uracil with 3,4-dihydroxy-2-butanone 4-phosphate. This is the penultimate step in the biosynthesis of riboflavin. This chain is 6,7-dimethyl-8-ribityllumazine synthase, found in Pectobacterium carotovorum subsp. carotovorum (strain PC1).